A 193-amino-acid polypeptide reads, in one-letter code: Ion-translocating oxidoreductase complex subunit A (193 aa).

The next 6 helical transmembrane spans lie at 5-25, 38-58, 65-85, 102-122, 134-154, and 171-191; these read LLIL…FLGL, AMGM…CSYL, APLG…AVVV, VLGI…VALL, ILYG…FSAM, and AIGM…TGLV.

The protein belongs to the NqrDE/RnfAE family. The complex is composed of six subunits: RnfA, RnfB, RnfC, RnfD, RnfE and RnfG.

The protein resides in the cell inner membrane. Its function is as follows. Part of a membrane-bound complex that couples electron transfer with translocation of ions across the membrane. This is Ion-translocating oxidoreductase complex subunit A from Hahella chejuensis (strain KCTC 2396).